We begin with the raw amino-acid sequence, 353 residues long: GTPase Obg (353 aa).

An Obg domain is found at 1-159 (MKFIDEATIK…FELYLELKVL (159 aa)). An OBG-type G domain is found at 160-332 (ADVGLLGMPN…LTYAIMEHVE (173 aa)). Residues 166-173 (GMPNAGKS), 191-195 (FTTLH), 213-216 (DVPG), 284-287 (NKVD), and 313-315 (SAL) each bind GTP. Mg(2+)-binding residues include serine 173 and threonine 193.

Belongs to the TRAFAC class OBG-HflX-like GTPase superfamily. OBG GTPase family. In terms of assembly, monomer. Mg(2+) is required as a cofactor.

It is found in the cytoplasm. An essential GTPase which binds GTP, GDP and possibly (p)ppGpp with moderate affinity, with high nucleotide exchange rates and a fairly low GTP hydrolysis rate. Plays a role in control of the cell cycle, stress response, ribosome biogenesis and in those bacteria that undergo differentiation, in morphogenesis control. This is GTPase Obg from Methylobacillus flagellatus (strain ATCC 51484 / DSM 6875 / VKM B-1610 / KT).